The following is a 152-amino-acid chain: 3-dehydroquinate dehydratase (152 aa).

Tyrosine 25 functions as the Proton acceptor in the catalytic mechanism. Residues asparagine 76, histidine 82, and aspartate 89 each contribute to the substrate site. Histidine 102 serves as the catalytic Proton donor. Substrate contacts are provided by residues 103–104 (LS) and arginine 113.

This sequence belongs to the type-II 3-dehydroquinase family. As to quaternary structure, homododecamer.

It carries out the reaction 3-dehydroquinate = 3-dehydroshikimate + H2O. Its pathway is metabolic intermediate biosynthesis; chorismate biosynthesis; chorismate from D-erythrose 4-phosphate and phosphoenolpyruvate: step 3/7. Its function is as follows. Catalyzes a trans-dehydration via an enolate intermediate. This chain is 3-dehydroquinate dehydratase, found in Gloeothece citriformis (strain PCC 7424) (Cyanothece sp. (strain PCC 7424)).